A 630-amino-acid chain; its full sequence is Betaine/ectoine transporter LcoP (630 aa).

Positions 1-13 are enriched in polar residues; that stretch reads MSTNSGNNLPESQ. The segment at 1 to 28 is disordered; that stretch reads MSTNSGNNLPESQESPEEPHYPHDTHPG. The segment covering 17 to 26 has biased composition (basic and acidic residues); sequence EEPHYPHDTH. Transmembrane regions (helical) follow at residues 47–67, 85–105, 125–145, 177–197, 230–250, 267–287, 299–319, 354–374, 385–405, 436–456, 479–499, and 510–530; these read TVFG…ISSP, TGWL…YIAF, FSWI…FFGP, FHWG…LAYS, MAII…AIQV, ILIA…VSGV, ISLT…LFLL, WTAF…MFIA, FALI…TIFG, LPLY…FFVT, LIVV…LLTG, and LTIL…IAFI. The segment at 611–630 is disordered; sequence WADGWTPESTEEGEVDAKKD.

It belongs to the BCCT transporter (TC 2.A.15) family.

Its subcellular location is the cell membrane. With respect to regulation, uptake is activated by hyperosmotic stress. Shows a small but significant chill stimulation around 15 degrees Celsius. Functionally, involved in the uptake of osmoprotectants. Can transport betaine and ectoine. Na(+) is probably the coupling ion. The chain is Betaine/ectoine transporter LcoP from Corynebacterium glutamicum (strain ATCC 13032 / DSM 20300 / JCM 1318 / BCRC 11384 / CCUG 27702 / LMG 3730 / NBRC 12168 / NCIMB 10025 / NRRL B-2784 / 534).